The primary structure comprises 259 residues: MTNKIKIGHVHMSGCTGCLVSLADNNLGLIKILDDYADLVYCLTLADVRHIPEMDVALVEGSVCLQDHESVEDIKETRKKSKIVVALGSCACYGNITRFSRGGQHNQPQHESYLPIGDLIDVDVYIPGCPPSPELIRNVAVMAYLLLEGNEEQKELAGKYLKPLMDLAKRGTSGCFCDLMYDVINQGLCMGCGTCAASCPVHAITLEFGKPQGERDLCIKCGSCYGACPRSFFNLDVIPEFENINEIIANALKEGESDD.

2 consecutive 4Fe-4S ferredoxin-type domains span residues 180-208 (MYDVINQGLCMGCGTCAASCPVHAITLEF) and 209-238 (GKPQGERDLCIKCGSCYGACPRSFFNLDVI). Residues Cys189, Cys192, Cys195, Cys199, Cys218, Cys221, Cys224, and Cys228 each coordinate [4Fe-4S] cluster.

Belongs to the FrhG family. In terms of assembly, pentamer of two alpha chains, two beta chains and a gamma chain. It depends on Ni(2+) as a cofactor. Iron-sulfur cluster is required as a cofactor. FAD serves as cofactor.

It catalyses the reaction oxidized coenzyme F420-(gamma-L-Glu)(n) + H2 + H(+) = reduced coenzyme F420-(gamma-L-Glu)(n). In terms of biological role, reduces the physiological low-potential two-electron acceptor coenzyme F420, and the artificial one-electron acceptor methylviologen. The protein is Coenzyme F420 hydrogenase subunit gamma (frhG) of Methanosarcina barkeri (strain Fusaro / DSM 804).